A 217-amino-acid chain; its full sequence is Large ribosomal subunit protein uL3 (217 aa).

Positions 127-162 are disordered; that stretch reads GFSRGPMSHGSKNHRAPGSTGAGTTPGRIYPGKRMA. Residues 142 to 153 are compositionally biased toward low complexity; that stretch reads APGSTGAGTTPG.

This sequence belongs to the universal ribosomal protein uL3 family. In terms of assembly, part of the 50S ribosomal subunit. Forms a cluster with proteins L14 and L19.

One of the primary rRNA binding proteins, it binds directly near the 3'-end of the 23S rRNA, where it nucleates assembly of the 50S subunit. The chain is Large ribosomal subunit protein uL3 from Prochlorococcus marinus (strain MIT 9301).